The sequence spans 559 residues: NAD-dependent histone deacetylase SIR2 (559 aa).

Residues 1–73 are disordered; the sequence is MSESASMLQG…NDHSAQEVAG (73 aa). Residues 39-51 are compositionally biased toward basic and acidic residues; it reads NDEKELLEATKAD. Positions 52–62 are enriched in acidic residues; that stretch reads ELDEVVDDYAE. The Deacetylase sirtuin-type domain occupies 223–514; it reads RLANFFTLDH…AFIAQKCGWD (292 aa). NAD(+)-binding positions include 248–267 and 330–333; these read GAGISTSLGIPDFRSSKGFY and QNID. His-350 acts as the Proton acceptor in catalysis. Zn(2+)-binding residues include Cys-358, Cys-361, Cys-382, and Cys-385. NAD(+) contacts are provided by residues 458–460, 483–485, and Cys-500; these read GTS and NRD.

The protein belongs to the sirtuin family. Class I subfamily. The cofactor is Zn(2+).

It localises to the nucleus. The catalysed reaction is N(6)-acetyl-L-lysyl-[protein] + NAD(+) + H2O = 2''-O-acetyl-ADP-D-ribose + nicotinamide + L-lysyl-[protein]. Functionally, NAD-dependent deacetylase. Heterochromatin component that silences transcription at silent mating loci, telomeres and the ribosomal DNA, and that also suppresses recombination in the rDNA and extends replicative life span. It acts as a NAD-dependent histone deacetylase, which deacetylates 'Lys-9' and 'Lys-14' of Histone H3 and 'Lys-16' of Histone H4. This is NAD-dependent histone deacetylase SIR2 (SIR2) from Eremothecium gossypii (strain ATCC 10895 / CBS 109.51 / FGSC 9923 / NRRL Y-1056) (Yeast).